Here is a 925-residue protein sequence, read N- to C-terminus: Eukaryotic translation initiation factor 3 subunit A (925 aa).

The segment at 108–127 (QAQTDAKEESNKDQAEEDLE) is disordered. Over residues 112–121 (DAKEESNKDQ) the composition is skewed to basic and acidic residues. Residues 324 to 498 (FKFYSSQFVL…DTVSFAQDPF (175 aa)) form the PCI domain. 2 disordered regions span residues 509–544 (PESS…FTRN) and 839–925 (KEAL…AGRG). Coiled-coil stretches lie at residues 534–666 (EEQN…MKKL) and 785–885 (SVIA…SSRS). The span at 839 to 880 (KEALAKEEELAKRRAERERINKERDEIARKQREIEELLEKKN) shows a compositional bias: basic and acidic residues. Residues 916–925 (RLKRMNAGRG) show a composition bias toward basic residues.

This sequence belongs to the eIF-3 subunit A family. As to quaternary structure, component of the eukaryotic translation initiation factor 3 (eIF-3) complex.

Its subcellular location is the cytoplasm. In terms of biological role, RNA-binding component of the eukaryotic translation initiation factor 3 (eIF-3) complex, which is involved in protein synthesis of a specialized repertoire of mRNAs and, together with other initiation factors, stimulates binding of mRNA and methionyl-tRNAi to the 40S ribosome. The eIF-3 complex specifically targets and initiates translation of a subset of mRNAs involved in cell proliferation. The sequence is that of Eukaryotic translation initiation factor 3 subunit A from Kluyveromyces lactis (strain ATCC 8585 / CBS 2359 / DSM 70799 / NBRC 1267 / NRRL Y-1140 / WM37) (Yeast).